The primary structure comprises 1029 residues: Eukaryotic translation initiation factor 3 subunit A (1029 aa).

Residues 92-121 (LKKFIELAEQKVTEAQAKADEIQSSLESAA) adopt a coiled-coil conformation. The region spanning 339-523 (MTKAASFVLL…GVLTFESDIF (185 aa)) is the PCI domain. Positions 606 to 903 (TRRAIIEKRK…EEEAEQRRAA (298 aa)) form a coiled coil. Composition is skewed to basic and acidic residues over residues 621–632 (ALQKKQREEENR), 644–666 (EQQR…EQDR), 797–901 (TEKR…EQRR), and 913–924 (GPAREASPERTA). 2 disordered regions span residues 621-666 (ALQK…EQDR) and 797-1029 (TEKR…KQQQ). Residues 943-960 (AKAAASAGEQPAAAQEAT) are compositionally biased toward low complexity. Over residues 977–993 (ATRDGPSDSRDLSHARE) the composition is skewed to basic and acidic residues.

It belongs to the eIF-3 subunit A family. Component of the eukaryotic translation initiation factor 3 (eIF-3) complex.

The protein localises to the cytoplasm. In terms of biological role, RNA-binding component of the eukaryotic translation initiation factor 3 (eIF-3) complex, which is involved in protein synthesis of a specialized repertoire of mRNAs and, together with other initiation factors, stimulates binding of mRNA and methionyl-tRNAi to the 40S ribosome. The eIF-3 complex specifically targets and initiates translation of a subset of mRNAs involved in cell proliferation. This Coccidioides immitis (strain RS) (Valley fever fungus) protein is Eukaryotic translation initiation factor 3 subunit A.